Here is a 171-residue protein sequence, read N- to C-terminus: NADH-quinone oxidoreductase subunit I 1 (171 aa).

4Fe-4S ferredoxin-type domains are found at residues 39–71 and 81–110; these read IVLT…LTKA and EHFR…LTPD. [4Fe-4S] cluster is bound by residues Cys51, Cys54, Cys57, Cys61, Cys90, Cys93, Cys96, and Cys100.

Belongs to the complex I 23 kDa subunit family. In terms of assembly, NDH-1 is composed of 14 different subunits. Subunits NuoA, H, J, K, L, M, N constitute the membrane sector of the complex. [4Fe-4S] cluster is required as a cofactor.

It localises to the cell inner membrane. The enzyme catalyses a quinone + NADH + 5 H(+)(in) = a quinol + NAD(+) + 4 H(+)(out). Its function is as follows. NDH-1 shuttles electrons from NADH, via FMN and iron-sulfur (Fe-S) centers, to quinones in the respiratory chain. The immediate electron acceptor for the enzyme in this species is believed to be ubiquinone. Couples the redox reaction to proton translocation (for every two electrons transferred, four hydrogen ions are translocated across the cytoplasmic membrane), and thus conserves the redox energy in a proton gradient. This chain is NADH-quinone oxidoreductase subunit I 1, found in Rhodopseudomonas palustris (strain BisB5).